A 912-amino-acid polypeptide reads, in one-letter code: Nonsense-mediated mRNA decay factor SMG8 (912 aa).

A disordered region spans residues 565–630; it reads EHSNRTPDAS…GEDEDETLEQ (66 aa). The segment covering 570–602 has biased composition (polar residues); it reads TPDASTHPPMTNENSPHLSGSQKSQDSASNLTF. Over residues 604 to 614 the composition is skewed to basic and acidic residues; sequence MDEKRDEENKS.

This sequence belongs to the SMG8 family.

Functionally, involved in nonsense-mediated decay (NMD) of mRNAs containing premature stop codons. Probable component of kinase complex containing SMG1 and recruited to stalled ribosomes. This Culex quinquefasciatus (Southern house mosquito) protein is Nonsense-mediated mRNA decay factor SMG8.